We begin with the raw amino-acid sequence, 230 residues long: UPF0173 metal-dependent hydrolase LI0883 (230 aa).

It belongs to the UPF0173 family.

This chain is UPF0173 metal-dependent hydrolase LI0883, found in Lawsonia intracellularis (strain PHE/MN1-00).